A 302-amino-acid chain; its full sequence is Aspartate carbamoyltransferase catalytic subunit (302 aa).

2 residues coordinate carbamoyl phosphate: Arg-53 and Thr-54. Position 82 (Lys-82) interacts with L-aspartate. Carbamoyl phosphate is bound by residues Arg-103, His-131, and Gln-134. The L-aspartate site is built by Arg-164 and Arg-223. Leu-260 and Pro-261 together coordinate carbamoyl phosphate.

Belongs to the aspartate/ornithine carbamoyltransferase superfamily. ATCase family. In terms of assembly, heterooligomer of catalytic and regulatory chains.

It catalyses the reaction carbamoyl phosphate + L-aspartate = N-carbamoyl-L-aspartate + phosphate + H(+). The protein operates within pyrimidine metabolism; UMP biosynthesis via de novo pathway; (S)-dihydroorotate from bicarbonate: step 2/3. Catalyzes the condensation of carbamoyl phosphate and aspartate to form carbamoyl aspartate and inorganic phosphate, the committed step in the de novo pyrimidine nucleotide biosynthesis pathway. This Methanococcus maripaludis (strain C5 / ATCC BAA-1333) protein is Aspartate carbamoyltransferase catalytic subunit.